We begin with the raw amino-acid sequence, 406 residues long: Argininosuccinate synthase (406 aa).

ATP is bound by residues 10-18 and A37; that span reads AYSGGLDTS. Positions 88 and 93 each coordinate L-citrulline. G118 provides a ligand contact to ATP. Positions 120, 124, and 125 each coordinate L-aspartate. Residue N124 coordinates L-citrulline. 5 residues coordinate L-citrulline: R128, S179, S188, E264, and Y276.

The protein belongs to the argininosuccinate synthase family. Type 1 subfamily. In terms of assembly, homotetramer.

The protein resides in the cytoplasm. The enzyme catalyses L-citrulline + L-aspartate + ATP = 2-(N(omega)-L-arginino)succinate + AMP + diphosphate + H(+). It functions in the pathway amino-acid biosynthesis; L-arginine biosynthesis; L-arginine from L-ornithine and carbamoyl phosphate: step 2/3. In Roseobacter denitrificans (strain ATCC 33942 / OCh 114) (Erythrobacter sp. (strain OCh 114)), this protein is Argininosuccinate synthase.